Here is a 921-residue protein sequence, read N- to C-terminus: Probable dipeptidyl-aminopeptidase B (921 aa).

Residues 1 to 33 are disordered; it reads MAGHTEENAQLLSTEQESVSRHSSDSAASTAST. At 1-109 the chain is on the cytoplasmic side; that stretch reads MAGHTEENAQ…NKSVDKKLRK (109 aa). Positions 8 to 17 are enriched in polar residues; the sequence is NAQLLSTEQE. The helical; Signal-anchor for type II membrane protein transmembrane segment at 110–130 threads the bilayer; sequence LIWIVGGVFIGAWVLALFIFL. Residues 131–921 lie on the Vacuolar side of the membrane; sequence GKQAYKHSSE…VPLQIDAAKV (791 aa). Residue Asn362 is glycosylated (N-linked (GlcNAc...) asparagine). The active-site Charge relay system is Ser768. The N-linked (GlcNAc...) asparagine glycan is linked to Asn822. Catalysis depends on charge relay system residues Asp845 and His878.

It belongs to the peptidase S9B family.

It localises to the vacuole membrane. The enzyme catalyses Release of an N-terminal dipeptide, Xaa-Yaa-|-Zaa-, from a polypeptide, preferentially when Yaa is Pro, provided Zaa is neither Pro nor hydroxyproline.. Type IV dipeptidyl-peptidase which removes N-terminal dipeptides sequentially from polypeptides having unsubstituted N-termini provided that the penultimate residue is proline. The sequence is that of Probable dipeptidyl-aminopeptidase B (dapB) from Sclerotinia sclerotiorum (strain ATCC 18683 / 1980 / Ss-1) (White mold).